The chain runs to 265 residues: ClpXP adapter protein SpxH (265 aa).

It belongs to the SpxH family. Interacts with Spx.

The protein localises to the cytoplasm. Adapter protein required for efficient degradation of Spx by ClpXP under non-stress conditions. Interaction with Spx stabilizes Spx and exposes the C-terminus of Spx for recognition and proteolysis by ClpXP. In Staphylococcus epidermidis (strain ATCC 35984 / DSM 28319 / BCRC 17069 / CCUG 31568 / BM 3577 / RP62A), this protein is ClpXP adapter protein SpxH.